Reading from the N-terminus, the 239-residue chain is Large ribosomal subunit protein bL25 (239 aa).

The segment at 217–239 (IKAEAHAAEGTQAEGSTEEGQQQ) is disordered. Residues 229-239 (AEGSTEEGQQQ) show a composition bias toward polar residues.

It belongs to the bacterial ribosomal protein bL25 family. CTC subfamily. In terms of assembly, part of the 50S ribosomal subunit; part of the 5S rRNA/L5/L18/L25 subcomplex. Contacts the 5S rRNA. Binds to the 5S rRNA independently of L5 and L18.

Its function is as follows. This is one of the proteins that binds to the 5S RNA in the ribosome where it forms part of the central protuberance. In Deinococcus deserti (strain DSM 17065 / CIP 109153 / LMG 22923 / VCD115), this protein is Large ribosomal subunit protein bL25.